Consider the following 89-residue polypeptide: Defensin-like protein 103 (89 aa).

The signal sequence occupies residues 1–24 (MAITRKNLVAFCFTILFIISSIHC). 4 disulfides stabilise this stretch: cysteine 46-cysteine 84, cysteine 52-cysteine 75, cysteine 61-cysteine 82, and cysteine 65-cysteine 83.

This sequence belongs to the DEFL family.

The protein resides in the secreted. The sequence is that of Defensin-like protein 103 from Arabidopsis thaliana (Mouse-ear cress).